The chain runs to 380 residues: DNA replication and repair protein RecF (380 aa).

Gly-30–Thr-37 is a binding site for ATP.

This sequence belongs to the RecF family.

The protein resides in the cytoplasm. Functionally, the RecF protein is involved in DNA metabolism; it is required for DNA replication and normal SOS inducibility. RecF binds preferentially to single-stranded, linear DNA. It also seems to bind ATP. The chain is DNA replication and repair protein RecF from Mycobacterium sp. (strain KMS).